A 332-amino-acid chain; its full sequence is GTP 3',8-cyclase (332 aa).

A Radical SAM core domain is found at serine 7–alanine 221. Arginine 16 contributes to the GTP binding site. Positions 23 and 27 each coordinate [4Fe-4S] cluster. Position 29 (tyrosine 29) interacts with S-adenosyl-L-methionine. Cysteine 30 contributes to the [4Fe-4S] cluster binding site. Arginine 66 lines the GTP pocket. Residue glycine 70 participates in S-adenosyl-L-methionine binding. Threonine 97 provides a ligand contact to GTP. Serine 121 provides a ligand contact to S-adenosyl-L-methionine. Residue lysine 158 coordinates GTP. Residue methionine 192 coordinates S-adenosyl-L-methionine. Positions 256 and 259 each coordinate [4Fe-4S] cluster. Arginine 261–arginine 263 contributes to the GTP binding site. A [4Fe-4S] cluster-binding site is contributed by cysteine 273.

This sequence belongs to the radical SAM superfamily. MoaA family. As to quaternary structure, monomer and homodimer. Requires [4Fe-4S] cluster as cofactor.

It catalyses the reaction GTP + AH2 + S-adenosyl-L-methionine = (8S)-3',8-cyclo-7,8-dihydroguanosine 5'-triphosphate + 5'-deoxyadenosine + L-methionine + A + H(+). It participates in cofactor biosynthesis; molybdopterin biosynthesis. Its function is as follows. Catalyzes the cyclization of GTP to (8S)-3',8-cyclo-7,8-dihydroguanosine 5'-triphosphate. This is GTP 3',8-cyclase from Lactiplantibacillus plantarum (strain ATCC BAA-793 / NCIMB 8826 / WCFS1) (Lactobacillus plantarum).